The primary structure comprises 832 residues: Armadillo segment polarity protein (832 aa).

Residues 1-20 (MSYQMPQNRTMSHNPYNSSD) show a composition bias toward polar residues. Residues 1-24 (MSYQMPQNRTMSHNPYNSSDMPMP) form a disordered region. ARM repeat units follow at residues 146-185 (NYQDDADLATRAIPELIKLLNDEDQVVVSQAAMMVHQLSK), 188-228 (ASRH…NLSH), 230-269 (RQGLLAIFKSGGIPALVKLLSSPVESVLFYAITTLHNLLL), 272-311 (DGSKMAVRLAGGLQKMVALLQRNNVKFLAIVTDCLQILAY), 356-395 (SSNKPAIVEAGGMQALAMHLGNPSQRLVQNCLWTLRNLSD), 397-434 (ATKVDGLETLLSGLVTVLGSSDVNVVTCAAGILSNLTC), 483-524 (SESA…NLAL), 594-634 (ELNR…ELAV), and 636-675 (KEVAEMIEAEGATAPLTELLNSANEGVATYAAAVLFKMSE). Residues 721–832 (AYEGLYGQGP…QVAAWYDTDL (112 aa)) are disordered. The segment covering 767–777 (PAGSNPNAGNN) has biased composition (low complexity).

This sequence belongs to the beta-catenin family.

The protein localises to the cytoplasm. It localises to the cell membrane. Its subcellular location is the cell junction. The protein resides in the adherens junction. Its function is as follows. May associate with CadN and participate in the transmission of developmental information. Can associate with alpha-catenin. Accumulates through wg signaling; arm function in wg signal transduction is required early in development for determination of neuroblast fate. Arm and Abl proteins function cooperatively at adherens junctions in both the CNS and epidermis. In Aedes aegypti (Yellowfever mosquito), this protein is Armadillo segment polarity protein.